The following is a 337-amino-acid chain: Glyceraldehyde-3-phosphate dehydrogenase (337 aa).

NAD(+) contacts are provided by residues 11 to 12 (TI) and Gly-111. 140-142 (SCN) is a D-glyceraldehyde 3-phosphate binding site. The active-site Nucleophile is the Cys-141. Arg-169 serves as a coordination point for NAD(+). A disordered region spans residues 177-196 (KKGPINSIVPTTEVPSHHGP). Residue 194 to 195 (HG) coordinates D-glyceraldehyde 3-phosphate. Gln-301 contacts NAD(+).

The protein belongs to the glyceraldehyde-3-phosphate dehydrogenase family. In terms of assembly, homotetramer.

The protein localises to the cytoplasm. The enzyme catalyses D-glyceraldehyde 3-phosphate + phosphate + NADP(+) = (2R)-3-phospho-glyceroyl phosphate + NADPH + H(+). The catalysed reaction is D-glyceraldehyde 3-phosphate + phosphate + NAD(+) = (2R)-3-phospho-glyceroyl phosphate + NADH + H(+). The protein operates within carbohydrate degradation; glycolysis; pyruvate from D-glyceraldehyde 3-phosphate: step 1/5. The protein is Glyceraldehyde-3-phosphate dehydrogenase of Methanosphaera stadtmanae (strain ATCC 43021 / DSM 3091 / JCM 11832 / MCB-3).